The sequence spans 294 residues: 4-hydroxy-tetrahydrodipicolinate synthase (294 aa).

Threonine 45 serves as a coordination point for pyruvate. The Proton donor/acceptor role is filled by tyrosine 133. The Schiff-base intermediate with substrate role is filled by lysine 161. Isoleucine 203 is a binding site for pyruvate.

The protein belongs to the DapA family. As to quaternary structure, homotetramer; dimer of dimers.

The protein resides in the cytoplasm. The catalysed reaction is L-aspartate 4-semialdehyde + pyruvate = (2S,4S)-4-hydroxy-2,3,4,5-tetrahydrodipicolinate + H2O + H(+). Its pathway is amino-acid biosynthesis; L-lysine biosynthesis via DAP pathway; (S)-tetrahydrodipicolinate from L-aspartate: step 3/4. Catalyzes the condensation of (S)-aspartate-beta-semialdehyde [(S)-ASA] and pyruvate to 4-hydroxy-tetrahydrodipicolinate (HTPA). The sequence is that of 4-hydroxy-tetrahydrodipicolinate synthase from Buchnera aphidicola subsp. Schizaphis graminum (strain Sg).